The primary structure comprises 127 residues: MFRTMMNGKIHRATVTEANLNYVGSITIDSAILEAVDMLPNEKVQIVNNNNGARIETYIIPGEPGSGVICLNGAAARHVQVGDVVIIMSYGMFTTEEAKTHEPKIVVLDEKNHIEMILPEEKAHTTL.

The Schiff-base intermediate with substrate; via pyruvic acid role is filled by serine 25. At serine 25 the chain carries Pyruvic acid (Ser). Threonine 57 lines the substrate pocket. The Proton donor role is filled by tyrosine 58. Substrate is bound at residue glycine 73–alanine 75.

It belongs to the PanD family. In terms of assembly, heterooctamer of four alpha and four beta subunits. Requires pyruvate as cofactor. Is synthesized initially as an inactive proenzyme, which is activated by self-cleavage at a specific serine bond to produce a beta-subunit with a hydroxyl group at its C-terminus and an alpha-subunit with a pyruvoyl group at its N-terminus.

The protein resides in the cytoplasm. It carries out the reaction L-aspartate + H(+) = beta-alanine + CO2. It functions in the pathway cofactor biosynthesis; (R)-pantothenate biosynthesis; beta-alanine from L-aspartate: step 1/1. Catalyzes the pyruvoyl-dependent decarboxylation of aspartate to produce beta-alanine. This Listeria monocytogenes serotype 4b (strain CLIP80459) protein is Aspartate 1-decarboxylase.